An 851-amino-acid polypeptide reads, in one-letter code: Envelope glycoprotein gp160 (851 aa).

The first 31 residues, Met-1–Asn-31, serve as a signal peptide directing secretion. At Asn-32–Ile-679 the chain is on the extracellular side. The cysteines at positions 53 and 73 are disulfide-linked. 18 N-linked (GlcNAc...) asparagine; by host glycosylation sites follow: Asn-87, Asn-132, Asn-136, Asn-143, Asn-148, Asn-159, Asn-163, Asn-193, Asn-205, Asn-238, Asn-242, Asn-249, Asn-270, Asn-303, Asn-309, Asn-339, Asn-346, and Asn-361. 5 disulfide bridges follow: Cys-118–Cys-213, Cys-125–Cys-204, Cys-130–Cys-160, Cys-226–Cys-255, and Cys-236–Cys-247. A V1 region spans residues Cys-130 to Asn-159. A V2 region spans residues Cys-160–Cys-204. Residues Cys-304–His-337 are V3. Cys-304 and Cys-338 are disulfide-bonded. Positions Ser-369–His-379 are CD4-binding loop. 2 cysteine pairs are disulfide-bonded: Cys-383–Cys-438 and Cys-390–Cys-411. The segment at Cys-390–Cys-411 is V4. N-linked (GlcNAc...) asparagine; by host glycans are attached at residues Asn-435, Asn-441, and Asn-455. The interval Arg-449–Asp-469 is disordered. V5 stretches follow at residues Asp-454–Gly-466 and Asn-456–Gly-466. The span at Thr-457–Asp-469 shows a compositional bias: basic and acidic residues. The interval Ala-507–Ala-527 is fusion peptide. The immunosuppression stretch occupies residues Lys-569–Leu-587. The cysteines at positions 593 and 599 are disulfide-linked. Residues Asn-606, Asn-611, Asn-620, and Asn-632 are each glycosylated (N-linked (GlcNAc...) asparagine; by host). Positions Lys-628 to Ala-662 form a coiled coil. The interval Ala-657–Lys-678 is MPER; binding to GalCer. Residues Phe-680–Val-700 traverse the membrane as a helical segment. The Cytoplasmic portion of the chain corresponds to Asn-701 to Leu-851. A YXXL motif; contains endocytosis signal motif is present at residues Tyr-707–Leu-710. Residues Gln-713–Lys-737 are disordered. Cys-759 is lipidated: S-palmitoyl cysteine; by host. The Di-leucine internalization motif motif lies at Leu-850–Leu-851.

This sequence belongs to the HIV-1 env protein family. The mature envelope protein (Env) consists of a homotrimer of non-covalently associated gp120-gp41 heterodimers. The resulting complex protrudes from the virus surface as a spike. There seems to be as few as 10 spikes on the average virion. Interacts with host CD4, CCR5 and CXCR4. Gp120 also interacts with the C-type lectins CD209/DC-SIGN and CLEC4M/DC-SIGNR (collectively referred to as DC-SIGN(R)). Gp120 and gp41 interact with GalCer. Gp120 interacts with host ITGA4/ITGB7 complex; on CD4+ T-cells, this interaction results in rapid activation of integrin ITGAL/LFA-1, which facilitates efficient cell-to-cell spreading of HIV-1. Gp120 interacts with cell-associated heparan sulfate; this interaction increases virus infectivity on permissive cells and may be involved in infection of CD4- cells. In terms of assembly, the mature envelope protein (Env) consists of a homotrimer of non-covalently associated gp120-gp41 heterodimers. The resulting complex protrudes from the virus surface as a spike. There seems to be as few as 10 spikes on the average virion. In terms of processing, highly glycosylated by host. The high number of glycan on the protein is reffered to as 'glycan shield' because it contributes to hide protein sequence from adaptive immune system. Palmitoylation of the transmembrane protein and of Env polyprotein (prior to its proteolytic cleavage) is essential for their association with host cell membrane lipid rafts. Palmitoylation is therefore required for envelope trafficking to classical lipid rafts, but not for viral replication. Post-translationally, specific enzymatic cleavages in vivo yield mature proteins. Envelope glycoproteins are synthesized as an inactive precursor that is heavily N-glycosylated and processed likely by host cell furin in the Golgi to yield the mature SU and TM proteins. The cleavage site between SU and TM requires the minimal sequence [KR]-X-[KR]-R. About 2 of the 9 disulfide bonds of gp41 are reduced by P4HB/PDI, following binding to CD4 receptor.

It localises to the virion membrane. The protein resides in the host cell membrane. The protein localises to the host endosome membrane. Functionally, oligomerizes in the host endoplasmic reticulum into predominantly trimers. In a second time, gp160 transits in the host Golgi, where glycosylation is completed. The precursor is then proteolytically cleaved in the trans-Golgi and thereby activated by cellular furin or furin-like proteases to produce gp120 and gp41. Attaches the virus to the host lymphoid cell by binding to the primary receptor CD4. This interaction induces a structural rearrangement creating a high affinity binding site for a chemokine coreceptor like CXCR4 and/or CCR5. Acts as a ligand for CD209/DC-SIGN and CLEC4M/DC-SIGNR, which are respectively found on dendritic cells (DCs), and on endothelial cells of liver sinusoids and lymph node sinuses. These interactions allow capture of viral particles at mucosal surfaces by these cells and subsequent transmission to permissive cells. HIV subverts the migration properties of dendritic cells to gain access to CD4+ T-cells in lymph nodes. Virus transmission to permissive T-cells occurs either in trans (without DCs infection, through viral capture and transmission), or in cis (following DCs productive infection, through the usual CD4-gp120 interaction), thereby inducing a robust infection. In trans infection, bound virions remain infectious over days and it is proposed that they are not degraded, but protected in non-lysosomal acidic organelles within the DCs close to the cell membrane thus contributing to the viral infectious potential during DCs' migration from the periphery to the lymphoid tissues. On arrival at lymphoid tissues, intact virions recycle back to DCs' cell surface allowing virus transmission to CD4+ T-cells. In terms of biological role, acts as a class I viral fusion protein. Under the current model, the protein has at least 3 conformational states: pre-fusion native state, pre-hairpin intermediate state, and post-fusion hairpin state. During fusion of viral and target intracellular membranes, the coiled coil regions (heptad repeats) assume a trimer-of-hairpins structure, positioning the fusion peptide in close proximity to the C-terminal region of the ectodomain. The formation of this structure appears to drive apposition and subsequent fusion of viral and target cell membranes. Complete fusion occurs in host cell endosomes and is dynamin-dependent, however some lipid transfer might occur at the plasma membrane. The virus undergoes clathrin-dependent internalization long before endosomal fusion, thus minimizing the surface exposure of conserved viral epitopes during fusion and reducing the efficacy of inhibitors targeting these epitopes. Membranes fusion leads to delivery of the nucleocapsid into the cytoplasm. This is Envelope glycoprotein gp160 from Homo sapiens (Human).